We begin with the raw amino-acid sequence, 437 residues long: Phosphatidylserine decarboxylase proenzyme 1, mitochondrial (437 aa).

A mitochondrion-targeting transit peptide spans 1-18 (MLKFHRNVKPQFGAFARY). Over 19 to 38 (SSLGKHNSRKRVGIIRLAYG) the chain is Mitochondrial matrix. The helical transmembrane segment at 39–57 (LTGIGLVGLAGFAWAQDRH) threads the bilayer. The Mitochondrial intermembrane segment spans residues 58 to 437 (EKTYQKKGVQ…PLGRVVPSSH (380 aa)). Catalysis depends on charge relay system; for autoendoproteolytic cleavage activity residues aspartate 157, histidine 287, and serine 401. The active-site Schiff-base intermediate with substrate; via pyruvic acid; for decarboxylase activity is the serine 401. At serine 401 the chain carries Pyruvic acid (Ser); by autocatalysis.

This sequence belongs to the phosphatidylserine decarboxylase family. PSD-B subfamily. Eukaryotic type I sub-subfamily. In terms of assembly, heterodimer of a large membrane-associated beta subunit and a small pyruvoyl-containing alpha subunit. Pyruvate is required as a cofactor. Post-translationally, is synthesized initially as an inactive proenzyme. Formation of the active enzyme involves a self-maturation process in which the active site pyruvoyl group is generated from an internal serine residue via an autocatalytic post-translational modification. Two non-identical subunits are generated from the proenzyme in this reaction, and the pyruvate is formed at the N-terminus of the alpha chain, which is derived from the carboxyl end of the proenzyme. The autoendoproteolytic cleavage occurs by a canonical serine protease mechanism, in which the side chain hydroxyl group of the serine supplies its oxygen atom to form the C-terminus of the beta chain, while the remainder of the serine residue undergoes an oxidative deamination to produce ammonia and the pyruvoyl prosthetic group on the alpha chain. During this reaction, the Ser that is part of the protease active site of the proenzyme becomes the pyruvoyl prosthetic group, which constitutes an essential element of the active site of the mature decarboxylase.

The protein localises to the mitochondrion. It is found in the mitochondrion inner membrane. The catalysed reaction is a 1,2-diacyl-sn-glycero-3-phospho-L-serine + H(+) = a 1,2-diacyl-sn-glycero-3-phosphoethanolamine + CO2. The protein operates within phospholipid metabolism; phosphatidylethanolamine biosynthesis; phosphatidylethanolamine from CDP-diacylglycerol: step 2/2. In terms of biological role, catalyzes the formation of phosphatidylethanolamine (PtdEtn) from phosphatidylserine (PtdSer). Plays a central role in phospholipid metabolism and in the interorganelle trafficking of phosphatidylserine. Together with psd2 and psd3, responsible for the majority of phosphatidylethanolamine synthesis. In Schizosaccharomyces pombe (strain 972 / ATCC 24843) (Fission yeast), this protein is Phosphatidylserine decarboxylase proenzyme 1, mitochondrial.